Here is a 171-residue protein sequence, read N- to C-terminus: Calcium channel flower homolog (171 aa).

At 1 to 31 (MSGSVAAGAAAGPVPPAQEEGMTWWYRWLCR) the chain is on the cytoplasmic side. Residues 32–52 (LAGVLGAVSCAISGLFNCVTI) form a helical membrane-spanning segment. Residues 53 to 56 (HPLN) are Extracellular-facing. Residues 57–77 (IAAGVWMIMNAFILLLCEAPF) form a helical membrane-spanning segment. Residues 78–101 (CCQFVEFANTVAEKVDRLRSWQKA) lie on the Cytoplasmic side of the membrane. A helical membrane pass occupies residues 102-122 (VFYCGMAIVPIVMSLTLTTLL). Residues 123 to 124 (GN) are Extracellular-facing. Residues 125–141 (AIAFATGVLYGLSALGK) form a helical membrane-spanning segment. Residues 142–171 (KGDAISYARIQQQRQQADEEKLAETFEGEL) are Cytoplasmic-facing.

It belongs to the calcium channel flower family. Interacts with adaptor protein complex 2 (AP-2). Expressed in calyces in the brain (at protein level). Detected in cultured hippocampal neurons (at protein level).

Its subcellular location is the cell membrane. It localises to the cytoplasmic vesicle. The protein resides in the secretory vesicle. The protein localises to the synaptic vesicle. It is found in the golgi apparatus. Its subcellular location is the vesicle. Its function is as follows. Transmembrane protein which mediates synaptic endocytosis and fitness-based cell culling. In response to different stimulus strengths, controls two major modes of synaptic vesicle (SV) retrieval in hippocampal neurons; Clathrin-mediated endocytosis (CME) in response to mild stimulation and activity-dependent bulk endocytosis (ADBE) in response to strong stimulation. In cytotoxic T-lymphoocytes (CTLs) facilitates calcium-dependent endocytosis of cytotoxic granules (CGs) at the immuno synapse. Different isoforms work as fitness fingerprints in 'loser' and 'winner' cells and thereby mediate win/lose decisions as part of the cell competition process. This is Calcium channel flower homolog (Cacfd1) from Rattus norvegicus (Rat).